A 753-amino-acid polypeptide reads, in one-letter code: 5-methyltetrahydropteroyltriglutamate--homocysteine methyltransferase (753 aa).

Residues 17–20 and Lys117 contribute to the 5-methyltetrahydropteroyltri-L-glutamate site; that span reads RELK. L-homocysteine contacts are provided by residues 431–433 and Glu484; that span reads IGS. L-methionine contacts are provided by residues 431-433 and Glu484; that span reads IGS. 5-methyltetrahydropteroyltri-L-glutamate-binding positions include 515-516 and Trp561; that span reads RC. Asp599 contributes to the L-homocysteine binding site. Asp599 contributes to the L-methionine binding site. Glu605 contacts 5-methyltetrahydropteroyltri-L-glutamate. Residues His641, Cys643, and Glu665 each coordinate Zn(2+). The active-site Proton donor is the His694. Residue Cys726 coordinates Zn(2+).

The protein belongs to the vitamin-B12 independent methionine synthase family. It depends on Zn(2+) as a cofactor.

It catalyses the reaction 5-methyltetrahydropteroyltri-L-glutamate + L-homocysteine = tetrahydropteroyltri-L-glutamate + L-methionine. It participates in amino-acid biosynthesis; L-methionine biosynthesis via de novo pathway; L-methionine from L-homocysteine (MetE route): step 1/1. Catalyzes the transfer of a methyl group from 5-methyltetrahydrofolate to homocysteine resulting in methionine formation. In Shigella sonnei (strain Ss046), this protein is 5-methyltetrahydropteroyltriglutamate--homocysteine methyltransferase.